The primary structure comprises 256 residues: Calsenilin (256 aa).

The disordered stretch occupies residues 1–22 (MQRTKEAMKASDGSLLGDPGRI). Serine 14 bears the Phosphoserine mark. A Glycyl lysine isopeptide (Lys-Gly) (interchain with G-Cter in SUMO1) cross-link involves residue lysine 26. S-palmitoyl cysteine attachment occurs at residues cysteine 45 and cysteine 46. Serine 60 and serine 63 each carry phosphoserine. The 57-residue stretch at 67-123 (LELSTVRHQPEGLDQLQAQTKFTKKELQSLYRGFKNECPTGLVDEDTFKLIYSQFFP) folds into the EF-hand 1; degenerate domain. Lysine 90 is covalently cross-linked (Glycyl lysine isopeptide (Lys-Gly) (interchain with G-Cter in SUMO1)). EF-hand domains follow at residues 126–161 (DATT…LLRG), 162–197 (TVHE…IYDM), and 210–245 (APLE…DENI). Residues aspartate 175, asparagine 177, aspartate 179, tyrosine 181, glutamate 186, aspartate 223, asparagine 225, aspartate 227, and glutamate 234 each coordinate Ca(2+). Residues 243–256 (ENIMSSMQLFENVI) form an interaction with KCND2 region.

This sequence belongs to the recoverin family. In terms of assembly, binds to DNA as a homomultimer. Dimerization is induced by binding to calcium. Interacts with the C-terminus of PSEN1 and PSEN2 and with PSEN2 CTF subunit. Associates with KCN1. Component of heteromultimeric potassium channels. Identified in potassium channel complexes containing KCND1, KCND2, KCND3, KCNIP1, KCNIP2, KCNIP3, KCNIP4, DPP6 and DPP10. Interacts with KCND2 and KCND3. Palmitoylated. Palmitoylation enhances association with the plasma membrane. In terms of processing, proteolytically cleaved by caspase-3. As to expression, detected in brain cortex, thalamus, dentate gyrus and cerebellum (at protein level). Expressed in brain. Colocalizes with KCND2 in excitatory neurons including cortical and hippocampal CA1 pyramidal cells.

The protein resides in the cytoplasm. It localises to the cell membrane. The protein localises to the endoplasmic reticulum. It is found in the golgi apparatus. Its subcellular location is the nucleus. In terms of biological role, calcium-dependent transcriptional repressor that binds to the DRE element of genes including PDYN and FOS. Affinity for DNA is reduced upon binding to calcium and enhanced by binding to magnesium. Seems to be involved in nociception. Functionally, regulatory subunit of Kv4/D (Shal)-type voltage-gated rapidly inactivating A-type potassium channels, such as KCND2/Kv4.2 and KCND3/Kv4.3. Modulates channel expression at the cell membrane, gating characteristics, inactivation kinetics and rate of recovery from inactivation in a calcium-dependent and isoform-specific manner. Its function is as follows. May play a role in the regulation of PSEN2 proteolytic processing and apoptosis. Together with PSEN2 involved in modulation of amyloid-beta formation. The polypeptide is Calsenilin (Kcnip3) (Rattus norvegicus (Rat)).